A 307-amino-acid polypeptide reads, in one-letter code: Oxygen-dependent coproporphyrinogen-III oxidase (307 aa).

Ser-99 contacts substrate. Residues His-103 and His-113 each contribute to the a divalent metal cation site. His-113 serves as the catalytic Proton donor. 115–117 (NVR) serves as a coordination point for substrate. Residues His-152 and His-182 each coordinate a divalent metal cation. Residues 247–282 (YVEFNLVFDRGTLFGLQSGGRTESILMSMPPVANWR) form an important for dimerization region. Substrate is bound at residue 265-267 (GGR).

This sequence belongs to the aerobic coproporphyrinogen-III oxidase family. As to quaternary structure, homodimer. Requires a divalent metal cation as cofactor.

Its subcellular location is the cytoplasm. It carries out the reaction coproporphyrinogen III + O2 + 2 H(+) = protoporphyrinogen IX + 2 CO2 + 2 H2O. Its pathway is porphyrin-containing compound metabolism; protoporphyrin-IX biosynthesis; protoporphyrinogen-IX from coproporphyrinogen-III (O2 route): step 1/1. Involved in the heme biosynthesis. Catalyzes the aerobic oxidative decarboxylation of propionate groups of rings A and B of coproporphyrinogen-III to yield the vinyl groups in protoporphyrinogen-IX. This is Oxygen-dependent coproporphyrinogen-III oxidase from Burkholderia lata (strain ATCC 17760 / DSM 23089 / LMG 22485 / NCIMB 9086 / R18194 / 383).